The primary structure comprises 707 residues: Elongation factor G (707 aa).

One can recognise a tr-type G domain in the interval Glu-8 to Thr-290. GTP is bound by residues Ala-17–Thr-24, Asp-88–His-92, and Asn-142–Asp-145.

The protein belongs to the TRAFAC class translation factor GTPase superfamily. Classic translation factor GTPase family. EF-G/EF-2 subfamily.

It localises to the cytoplasm. In terms of biological role, catalyzes the GTP-dependent ribosomal translocation step during translation elongation. During this step, the ribosome changes from the pre-translocational (PRE) to the post-translocational (POST) state as the newly formed A-site-bound peptidyl-tRNA and P-site-bound deacylated tRNA move to the P and E sites, respectively. Catalyzes the coordinated movement of the two tRNA molecules, the mRNA and conformational changes in the ribosome. This chain is Elongation factor G, found in Idiomarina loihiensis (strain ATCC BAA-735 / DSM 15497 / L2-TR).